The sequence spans 329 residues: Protein-arginine N-acetylglucosaminyltransferase NleB1 (329 aa).

An N-beta-linked (GlcNAc) arginine; by autocatalysis glycan is attached at R13. 48 to 50 (QWF) is a UDP-N-acetyl-alpha-D-glucosamine binding site. N-beta-linked (GlcNAc) arginine; by autocatalysis glycosylation occurs at R53. Y72 is a binding site for UDP-N-acetyl-alpha-D-glucosamine. R159 carries an N-beta-linked (GlcNAc) arginine; by autocatalysis glycan. 219–222 (YLDA) serves as a coordination point for UDP-N-acetyl-alpha-D-glucosamine. Residues 221 to 223 (DAD) carry the DXD motif motif. D223 lines the Mn(2+) pocket. E253 functions as the Proton acceptor in the catalytic mechanism. An N-beta-linked (GlcNAc) arginine; by autocatalysis glycan is attached at R293. 2 residues coordinate Mn(2+): N320 and S322. UDP-N-acetyl-alpha-D-glucosamine contacts are provided by residues S322 and 327 to 329 (SSW).

This sequence belongs to the glycosyltransferase NleB family. It depends on Mn(2+) as a cofactor. In terms of processing, auto-glycosylated: arginine GlcNAcylation is required for activity toward death domain-containing host target proteins.

The protein localises to the secreted. The protein resides in the host cytoplasm. The enzyme catalyses L-arginyl-[protein] + UDP-N-acetyl-alpha-D-glucosamine = N(omega)-(N-acetyl-beta-D-glucosaminyl)-L-arginyl-[protein] + UDP + H(+). Protein-arginine N-acetylglucosaminyltransferase effector that disrupts TNF signaling in infected cells, including NF-kappa-B signaling, apoptosis and necroptosis. Acts by catalyzing the transfer of a single N-acetylglucosamine (GlcNAc) to a conserved arginine residue in the death domain of host proteins FADD, TRADD, FAS, TNFRSF1A/TNFR1, TNFRSF25/DR3 and RIPK1: arginine GlcNAcylation prevents homotypic/heterotypic death domain interactions and assembly of the oligomeric TNF-alpha receptor complex, thereby disrupting TNF signaling. Has preference for host FADD as substrate compared to other death domain-containing proteins. Also acts on host proteins without a death domain: catalyzes arginine GlcNAcylation of HIF1A, thereby regulating host glucose metabolism. Also displays intra-bacterial activity by mediating GlcNAcylation of glutathione synthetase GshB. Catalyzes auto-GlcNAcylation, which is required for activity toward death domain-containing host target proteins. Shows a higher enzymatic activity than NleB2. The polypeptide is Protein-arginine N-acetylglucosaminyltransferase NleB1 (Escherichia coli O127:H6 (strain E2348/69 / EPEC)).